The primary structure comprises 476 residues: Lactate utilization protein B 1 (476 aa).

2 4Fe-4S ferredoxin-type domains span residues 301 to 331 and 350 to 379; these read GTEFQSVLQCIRCAACINVCPVYRHIGGHAY and YDEYKDLPYASSLCGACTEACPVKIPLHDL. Residues Cys310, Cys313, Cys316, Cys320, Cys363, Cys366, and Cys370 each coordinate [4Fe-4S] cluster.

Belongs to the LutB/YkgF family.

Its function is as follows. Is involved in L-lactate degradation and allows cells to grow with lactate as the sole carbon source. Has probably a role as an electron transporter during oxidation of L-lactate. The chain is Lactate utilization protein B 1 from Bacillus mycoides (strain KBAB4) (Bacillus weihenstephanensis).